Reading from the N-terminus, the 363-residue chain is 3-isopropylmalate dehydrogenase (363 aa).

Residue 78 to 91 (GPKWEHLPPDQQPE) participates in NAD(+) binding. 4 residues coordinate substrate: arginine 99, arginine 109, arginine 138, and aspartate 227. Aspartate 227, aspartate 251, and aspartate 255 together coordinate Mg(2+). Residue 285–297 (GSAPDIAGKNIAN) coordinates NAD(+).

It belongs to the isocitrate and isopropylmalate dehydrogenases family. LeuB type 1 subfamily. As to quaternary structure, homodimer. Mg(2+) is required as a cofactor. It depends on Mn(2+) as a cofactor.

The protein localises to the cytoplasm. The enzyme catalyses (2R,3S)-3-isopropylmalate + NAD(+) = 4-methyl-2-oxopentanoate + CO2 + NADH. The protein operates within amino-acid biosynthesis; L-leucine biosynthesis; L-leucine from 3-methyl-2-oxobutanoate: step 3/4. Functionally, catalyzes the oxidation of 3-carboxy-2-hydroxy-4-methylpentanoate (3-isopropylmalate) to 3-carboxy-4-methyl-2-oxopentanoate. The product decarboxylates to 4-methyl-2 oxopentanoate. This chain is 3-isopropylmalate dehydrogenase, found in Escherichia coli O157:H7.